We begin with the raw amino-acid sequence, 445 residues long: MKPVIALVGRPNVGKSTLFNRLTRTRDALVADLPGLTRDRHYGEGRAGDRPYLVVDTGGFEPVAKDGILHEMARQTRQAVEESDIVVFIVDGRNGLAPQDKSIADYLRKVGRPIFLVVNKAEGMKYSNVAADFYELGLGDPRAISAAHGDGVTEMINEALEVAYAGQPEESDEEKQTRGVKIAIVGRPNVGKSTLINALVGEERVIAFDMPGTTRDSIYVDFERGGKPYTLIDTAGLRRRGKVFEAIEKFSVVKTLQSISDANVVILLLDARQDISEQDAHIAGFVVEQGRALVVGVNKWDGLDPHVRERTKADLERKLKFLDFAKFHFISAAEKTGIGPLMRSVDDAYAAAMAKLPTPKLTRALIDAVEFQQPRRRGPVRPKLRYAHQGGQNPPIIVIHGNALDAITETYKRYLENRFRETFKLTGTPLRIEFRSSTNPYADKG.

2 consecutive EngA-type G domains span residues 3-167 and 180-353; these read PVIA…YAGQ and VKIA…AAAM. GTP contacts are provided by residues 9–16, 56–60, 119–122, 186–193, 233–237, and 298–301; these read GRPNVGKS, DTGGF, NKAE, DTAGL, and NKWD. In terms of domain architecture, KH-like spans 354-438; that stretch reads AKLPTPKLTR…PLRIEFRSST (85 aa).

It belongs to the TRAFAC class TrmE-Era-EngA-EngB-Septin-like GTPase superfamily. EngA (Der) GTPase family. Associates with the 50S ribosomal subunit.

Functionally, GTPase that plays an essential role in the late steps of ribosome biogenesis. This chain is GTPase Der, found in Paraburkholderia phytofirmans (strain DSM 17436 / LMG 22146 / PsJN) (Burkholderia phytofirmans).